We begin with the raw amino-acid sequence, 494 residues long: Histidine--tRNA ligase (494 aa).

The protein belongs to the class-II aminoacyl-tRNA synthetase family. Homodimer.

It is found in the cytoplasm. The enzyme catalyses tRNA(His) + L-histidine + ATP = L-histidyl-tRNA(His) + AMP + diphosphate + H(+). The chain is Histidine--tRNA ligase from Cereibacter sphaeroides (strain ATCC 17023 / DSM 158 / JCM 6121 / CCUG 31486 / LMG 2827 / NBRC 12203 / NCIMB 8253 / ATH 2.4.1.) (Rhodobacter sphaeroides).